The sequence spans 383 residues: Aquaporin-5 (383 aa).

Over 1–46 (MSVTTLNGQPTLNISGPGQTALSRLDPLKKVFTKFFSSIPQKVRGH) the chain is Cytoplasmic. The helical transmembrane segment at 47 to 67 (VVAVIGELIGTTAFLFIAFSA) threads the bilayer. Residues 68 to 93 (AEVALASANDNKGDKVSYETKSISTT) lie on the Extracellular side of the membrane. A helical transmembrane segment spans residues 94–114 (QILFIAFGAGISLVVNAWTFF). Position 115 (Arg-115) is a topological domain, cytoplasmic. Residues 116-136 (ISGGLFDPAVSIALFFVGAID) form a helical membrane-spanning segment. The NPA 1 motif lies at 122–124 (DPA). At 137-140 (LTRC) the chain is on the extracellular side. A helical membrane pass occupies residues 141 to 161 (VLLCIAQCLGAIAASAMAYGL). At 162–180 (YHGGLHTATTLKPGMSPAQ) the chain is on the cytoplasmic side. A helical transmembrane segment spans residues 181–201 (GVIVEMILTCQLCFTVLMLAA). Over 202-207 (EKHEAT) the chain is Extracellular. A helical membrane pass occupies residues 208–228 (FLAPLGIGLSVFIGELAGVFW). The Cytoplasmic portion of the chain corresponds to 229–252 (TGGSMNPARSLGPAVVTLSFPSYH). An NPA 2 motif is present at residues 234 to 236 (NPA). The chain crosses the membrane as a helical span at residues 253–273 (WIYWVGPIAGAGLASIIYKLI). The Extracellular portion of the chain corresponds to 274–383 (KALEYETAQL…DGFFGEMYAD (110 aa)). Positions 332–349 (ARKSSSLVPTKSTKSGNS) are enriched in polar residues. The interval 332–383 (ARKSSSLVPTKSTKSGNSEVKKTETVVEEPAKTQPKPAPAADDGFFGEMYAD) is disordered. Positions 350–362 (EVKKTETVVEEPA) are enriched in basic and acidic residues. The span at 363–372 (KTQPKPAPAA) shows a compositional bias: low complexity.

It belongs to the MIP/aquaporin (TC 1.A.8) family.

Its subcellular location is the membrane. It catalyses the reaction H2O(in) = H2O(out). In terms of biological role, water channel required to facilitate the transport of water across membranes. May play a role in the vegetative growth. This chain is Aquaporin-5, found in Botryotinia fuckeliana (strain B05.10) (Noble rot fungus).